The primary structure comprises 470 residues: Sugar transporter ESL1 (470 aa).

Residues Leu-10–Leu-16 carry the Essential for the localization to the vacuole membrane motif. 12 helical membrane-spanning segments follow: residues Ile-28–Cys-48, Val-68–Phe-88, Lys-99–Ala-119, Leu-130–Ile-150, Gly-157–Ile-177, Leu-186–Glu-206, Val-268–Tyr-288, Ile-303–Val-323, Leu-332–Phe-352, Ile-368–Ile-388, Leu-404–Leu-424, and Gly-430–Val-450.

This sequence belongs to the major facilitator superfamily. Sugar transporter (TC 2.A.1.1) family. Expressed in both shoots and roots. In roots, strongly expressed in pericycle and xylem parenchyma cells, and to a lesser extent in the root endodermis. In flowers, expressed in sepals.

It localises to the vacuole membrane. The protein localises to the vesicle. Its function is as follows. Sugar transporter. Transports monosaccharides across the vacuolar membrane independently from a proton gradient. May function coordinately with the vacuolar invertase to regulate osmotic pressure by affecting the accumulation of sugar in the cells under abiotic stress conditions. This is Sugar transporter ESL1 from Arabidopsis thaliana (Mouse-ear cress).